Consider the following 668-residue polypeptide: DNA ligase (668 aa).

NAD(+) is bound by residues 35 to 39 (DKEYD) and 83 to 84 (SL). The active-site N6-AMP-lysine intermediate is Lys125. The NAD(+) site is built by Arg147, Glu181, and Lys317. Zn(2+) contacts are provided by Cys410, Cys413, Cys426, and Cys432. A BRCT domain is found at 591–668 (KKDNKFNGKT…TEEEFNEMIN (78 aa)).

This sequence belongs to the NAD-dependent DNA ligase family. LigA subfamily. It depends on Mg(2+) as a cofactor. The cofactor is Mn(2+).

It catalyses the reaction NAD(+) + (deoxyribonucleotide)n-3'-hydroxyl + 5'-phospho-(deoxyribonucleotide)m = (deoxyribonucleotide)n+m + AMP + beta-nicotinamide D-nucleotide.. DNA ligase that catalyzes the formation of phosphodiester linkages between 5'-phosphoryl and 3'-hydroxyl groups in double-stranded DNA using NAD as a coenzyme and as the energy source for the reaction. It is essential for DNA replication and repair of damaged DNA. The chain is DNA ligase from Clostridium tetani (strain Massachusetts / E88).